The chain runs to 901 residues: HTH-type transcriptional regulator MalT (901 aa).

39-46 (SPAGYGKT) provides a ligand contact to ATP. The region spanning 829–894 (ELIRTSPLTQ…AAVQHAQKLL (66 aa)) is the HTH luxR-type domain. The segment at residues 853 to 872 (NEQIAGELEVAATTIKTHIR) is a DNA-binding region (H-T-H motif).

It belongs to the MalT family. Monomer in solution. Oligomerizes to an active state in the presence of the positive effectors ATP and maltotriose.

With respect to regulation, activated by ATP and maltotriose, which are both required for DNA binding. In terms of biological role, positively regulates the transcription of the maltose regulon whose gene products are responsible for uptake and catabolism of malto-oligosaccharides. Specifically binds to the promoter region of its target genes, recognizing a short DNA motif called the MalT box. The sequence is that of HTH-type transcriptional regulator MalT from Shigella boydii serotype 4 (strain Sb227).